An 87-amino-acid chain; its full sequence is Small ribosomal subunit protein bS20 (87 aa).

The tract at residues 1–24 (MANTAQARKRARQSVERNKHNSSL) is disordered.

Belongs to the bacterial ribosomal protein bS20 family.

In terms of biological role, binds directly to 16S ribosomal RNA. In Bordetella avium (strain 197N), this protein is Small ribosomal subunit protein bS20.